Consider the following 471-residue polypeptide: UDP-N-acetylmuramate--L-alanine ligase (471 aa).

G112–T118 serves as a coordination point for ATP.

It belongs to the MurCDEF family.

It is found in the cytoplasm. It carries out the reaction UDP-N-acetyl-alpha-D-muramate + L-alanine + ATP = UDP-N-acetyl-alpha-D-muramoyl-L-alanine + ADP + phosphate + H(+). It participates in cell wall biogenesis; peptidoglycan biosynthesis. Functionally, cell wall formation. This is UDP-N-acetylmuramate--L-alanine ligase from Cupriavidus metallidurans (strain ATCC 43123 / DSM 2839 / NBRC 102507 / CH34) (Ralstonia metallidurans).